We begin with the raw amino-acid sequence, 150 residues long: Arginine repressor (150 aa).

This sequence belongs to the ArgR family.

It localises to the cytoplasm. The protein operates within amino-acid biosynthesis; L-arginine biosynthesis [regulation]. Regulates arginine biosynthesis genes. In Clostridium botulinum (strain 657 / Type Ba4), this protein is Arginine repressor.